A 483-amino-acid chain; its full sequence is Putative (R)-citramalate synthase CimA (483 aa).

Residues Met-1–Tyr-245 form the Pyruvate carboxyltransferase domain.

It belongs to the alpha-IPM synthase/homocitrate synthase family. As to quaternary structure, homodimer.

The catalysed reaction is pyruvate + acetyl-CoA + H2O = (3R)-citramalate + CoA + H(+). It participates in amino-acid biosynthesis; L-isoleucine biosynthesis; 2-oxobutanoate from pyruvate: step 1/3. Catalyzes the condensation of pyruvate and acetyl-coenzyme A to form (R)-citramalate. This chain is Putative (R)-citramalate synthase CimA, found in Methanosarcina acetivorans (strain ATCC 35395 / DSM 2834 / JCM 12185 / C2A).